Consider the following 417-residue polypeptide: CinA-like protein (417 aa).

Belongs to the CinA family.

The polypeptide is CinA-like protein (Synechococcus sp. (strain RCC307)).